A 166-amino-acid chain; its full sequence is Probable tyrosine-protein phosphatase DG1060 (166 aa).

The 154-residue stretch at N9–W162 folds into the Tyrosine-protein phosphatase domain. Residue C101 is the Phosphocysteine intermediate of the active site.

Belongs to the protein-tyrosine phosphatase family.

The protein localises to the cytoplasm. The catalysed reaction is O-phospho-L-tyrosyl-[protein] + H2O = L-tyrosyl-[protein] + phosphate. In Dictyostelium discoideum (Social amoeba), this protein is Probable tyrosine-protein phosphatase DG1060 (DG1060).